The following is a 1573-amino-acid chain: Mediator of RNA polymerase II transcription subunit 1 (1573 aa).

The LXXLL motif 1 signature appears at 588–592 (LTSLL). Disordered stretches follow at residues 595 to 691 (TSNS…EDDF), 774 to 883 (SKLP…FKDF), and 928 to 1564 (LGGP…GDDD). Residues 606 to 617 (PTPPQHTPPPAS) are compositionally biased toward pro residues. The LXXLL motif 2 motif lies at 629 to 633 (LMNLL). Residues 651-668 (ERQNSSGSPRTELGSSAS) are compositionally biased toward polar residues. Residues 678 to 691 (TGTEKMKNQTEDDF) show a composition bias toward basic and acidic residues. 3 stretches are compositionally biased toward polar residues: residues 791 to 804 (RDSS…STLF), 835 to 864 (GSPN…QSGF), and 934 to 944 (QETQSRSQSPL). The span at 949-961 (LGKDRPQKQKVKE) shows a compositional bias: basic and acidic residues. Residues 963-973 (GNGGGAGGGLS) show a composition bias toward gly residues. Composition is skewed to low complexity over residues 1025-1038 (PTST…GTSG), 1053-1085 (KITI…SSSS), 1092-1116 (SSLS…MKIG), 1124-1143 (SGQS…SMGK), and 1155-1164 (SSNVNNSSGS). Residues 1176–1193 (MNPSLSKPNISPSHSRPS) show a composition bias toward polar residues. The segment covering 1226 to 1277 (LSGSGSNSTTKSSSGLVSSGSLTQKPNSSSSSSSSSSSSSSSSSSSSSSFSS) has biased composition (low complexity). The span at 1278–1290 (GVSQNLHSSSKGK) shows a compositional bias: polar residues. The span at 1350–1362 (PTKREKGEKDKSK) shows a compositional bias: basic and acidic residues. Composition is skewed to polar residues over residues 1420 to 1435 (SQMQ…SGST) and 1443 to 1457 (PSHN…QALD). A compositionally biased stretch (low complexity) spans 1461–1471 (ESGSSSIAEKS). A compositionally biased stretch (basic residues) spans 1496 to 1505 (KHKKHKKEKK). The segment covering 1506 to 1518 (RLKDKDRDREKKK) has biased composition (basic and acidic residues).

Belongs to the Mediator complex subunit 1 family. As to quaternary structure, component of the Mediator complex.

It localises to the nucleus. Functionally, component of the Mediator complex, a coactivator involved in the regulated transcription of nearly all RNA polymerase II-dependent genes. Mediator functions as a bridge to convey information from gene-specific regulatory proteins to the basal RNA polymerase II transcription machinery. Mediator is recruited to promoters by direct interactions with regulatory proteins and serves as a scaffold for the assembly of a functional preinitiation complex with RNA polymerase II and the general transcription factors. This is Mediator of RNA polymerase II transcription subunit 1 (med1) from Xenopus tropicalis (Western clawed frog).